The following is a 667-amino-acid chain: Leucine zipper putative tumor suppressor 2 (667 aa).

The segment covering 1–25 has biased composition (low complexity); the sequence is MAIVQTLPVPLEPAPEAATAQQAPA. 3 disordered regions span residues 1–132, 150–325, and 516–541; these read MAIV…PVSG, PVLP…DEAL, and QEAE…PPVP. A required for centrosomal localization region spans residues 1–333; it reads MAIVQTLPVP…ALLHCVLEGK (333 aa). Polar residues predominate over residues 172–181; that stretch reads PSGSQGSLTQ. Over residues 187 to 198 the composition is skewed to low complexity; the sequence is ASSSSSSSSSAA. A compositionally biased stretch (polar residues) spans 212–232; the sequence is PSGTLSDSGRNSLSSLPTYST. Residues 241–282 are compositionally biased toward low complexity; sequence SPGGHLPSHGPGRGALPGPARGAPTGPSHSDSGRSSSSKSTG. Position 248 is a phosphoserine (Ser-248). A compositionally biased stretch (gly residues) spans 283–294; the sequence is SLGGRLAGGLLG. Position 295 is a phosphoserine (Ser-295). The span at 310–321 shows a compositional bias: pro residues; the sequence is SPPPPPPPPPPS. Positions 329–647 form a coiled coil; that stretch reads VLEGKLRDRE…LELEARELAD (319 aa). The segment at 445 to 667 is sufficient for interaction with CTNNB1; the sequence is SGEISLLKQQ…CLEEITATEI (223 aa). The segment at 448–667 is sufficient for interaction with KATNB1 and for inhibition of katanin-mediated microtubule severing; the sequence is ISLLKQQLKE…CLEEITATEI (220 aa). The segment covering 516–526 has biased composition (basic and acidic residues); it reads QEAERLREKAG. At Ser-568 the chain carries Phosphoserine. The short motif at 629–638 is the Nuclear export signal element; the sequence is LEQELQQLSL.

It belongs to the LZTS2 family. As to quaternary structure, interacts with KATNB1. Also interacts with CTNNB1, gamma-tubulin and KIF23.

The protein resides in the cytoplasm. It localises to the cytoskeleton. The protein localises to the microtubule organizing center. It is found in the centrosome. In terms of biological role, negative regulator of katanin-mediated microtubule severing and release from the centrosome. Required for central spindle formation and the completion of cytokinesis. May negatively regulate axonal outgrowth by preventing the formation of microtubule bundles that are necessary for transport within the elongating axon. Negative regulator of the Wnt signaling pathway. Represses beta-catenin-mediated transcriptional activation by promoting the nuclear exclusion of beta-catenin. This chain is Leucine zipper putative tumor suppressor 2, found in Bos taurus (Bovine).